Reading from the N-terminus, the 100-residue chain is Aspartyl/glutamyl-tRNA(Asn/Gln) amidotransferase subunit C (100 aa).

It belongs to the GatC family. In terms of assembly, heterotrimer of A, B and C subunits.

It catalyses the reaction L-glutamyl-tRNA(Gln) + L-glutamine + ATP + H2O = L-glutaminyl-tRNA(Gln) + L-glutamate + ADP + phosphate + H(+). It carries out the reaction L-aspartyl-tRNA(Asn) + L-glutamine + ATP + H2O = L-asparaginyl-tRNA(Asn) + L-glutamate + ADP + phosphate + 2 H(+). Functionally, allows the formation of correctly charged Asn-tRNA(Asn) or Gln-tRNA(Gln) through the transamidation of misacylated Asp-tRNA(Asn) or Glu-tRNA(Gln) in organisms which lack either or both of asparaginyl-tRNA or glutaminyl-tRNA synthetases. The reaction takes place in the presence of glutamine and ATP through an activated phospho-Asp-tRNA(Asn) or phospho-Glu-tRNA(Gln). In Dictyoglomus turgidum (strain DSM 6724 / Z-1310), this protein is Aspartyl/glutamyl-tRNA(Asn/Gln) amidotransferase subunit C.